A 377-amino-acid polypeptide reads, in one-letter code: Copper-containing nitrite reductase (377 aa).

The segment at residues 1–35 (MTNTLQMTRRTMLTGAAVAGALTPILTSGGGNASP) is a signal peptide (tat-type signal). Plastocyanin-like domains lie at 99–194 (MTFD…IMVL) and 259–360 (GAVG…FKVT). Residues histidine 132, histidine 137, histidine 172, cysteine 173, histidine 182, methionine 187, and histidine 343 each contribute to the Cu cation site.

Belongs to the multicopper oxidase family. As to quaternary structure, homotrimer. Cu(2+) is required as a cofactor. The cofactor is Cu(+). It depends on FAD as a cofactor. Post-translationally, predicted to be exported by the Tat system. The position of the signal peptide cleavage has not been experimentally proven.

It is found in the periplasm. The enzyme catalyses nitric oxide + Fe(III)-[cytochrome c] + H2O = Fe(II)-[cytochrome c] + nitrite + 2 H(+). Its pathway is nitrogen metabolism; nitrate reduction (denitrification); dinitrogen from nitrate: step 2/4. This chain is Copper-containing nitrite reductase (nirK), found in Rhizobium sullae (Rhizobium hedysari).